We begin with the raw amino-acid sequence, 312 residues long: Putative pyridoxal kinase BUD16 (312 aa).

Residues S9, T44, and Y122 each contribute to the substrate site. Residues 183–184 and 211–223 contribute to the ATP site; these read TS and RVPF…TGVG. Residue D224 coordinates substrate.

This sequence belongs to the pyridoxine kinase family. A divalent metal cation is required as a cofactor.

Its subcellular location is the cytoplasm. It localises to the nucleus. It catalyses the reaction pyridoxal + ATP = pyridoxal 5'-phosphate + ADP + H(+). Its function is as follows. Required for synthesis of pyridoxal-5-phosphate from vitamin B6. Important for bud site selection. The chain is Putative pyridoxal kinase BUD16 (BUD16) from Saccharomyces cerevisiae (strain ATCC 204508 / S288c) (Baker's yeast).